The sequence spans 393 residues: 1-deoxy-D-xylulose 5-phosphate reductoisomerase (393 aa).

NADPH is bound by residues Thr10, Gly11, Ser12, Ile13, Arg37, Gln38, and Asn124. Lys125 lines the 1-deoxy-D-xylulose 5-phosphate pocket. An NADPH-binding site is contributed by Glu126. Asp150 contacts Mn(2+). 1-deoxy-D-xylulose 5-phosphate is bound by residues Ser151, Glu152, Ser179, and His202. Glu152 serves as a coordination point for Mn(2+). NADPH is bound at residue Gly208. Residues Ser215, Asn220, Lys221, and Glu224 each contribute to the 1-deoxy-D-xylulose 5-phosphate site. Mn(2+) is bound at residue Glu224.

The protein belongs to the DXR family. Requires Mg(2+) as cofactor. Mn(2+) is required as a cofactor.

The catalysed reaction is 2-C-methyl-D-erythritol 4-phosphate + NADP(+) = 1-deoxy-D-xylulose 5-phosphate + NADPH + H(+). The protein operates within isoprenoid biosynthesis; isopentenyl diphosphate biosynthesis via DXP pathway; isopentenyl diphosphate from 1-deoxy-D-xylulose 5-phosphate: step 1/6. Its function is as follows. Catalyzes the NADPH-dependent rearrangement and reduction of 1-deoxy-D-xylulose-5-phosphate (DXP) to 2-C-methyl-D-erythritol 4-phosphate (MEP). This is 1-deoxy-D-xylulose 5-phosphate reductoisomerase from Cupriavidus necator (strain ATCC 17699 / DSM 428 / KCTC 22496 / NCIMB 10442 / H16 / Stanier 337) (Ralstonia eutropha).